The chain runs to 197 residues: Inosine triphosphate pyrophosphatase (197 aa).

10–15 (TGNANK) contacts ITP. Glutamate 45 provides a ligand contact to Mg(2+). ITP is bound by residues lysine 58, 76 to 77 (DT), lysine 93, 151 to 154 (FGWD), lysine 175, and 180 to 181 (HR).

This sequence belongs to the HAM1 NTPase family. As to quaternary structure, homodimer. Mg(2+) serves as cofactor. It depends on Mn(2+) as a cofactor.

It localises to the cytoplasm. The protein localises to the nucleus. It carries out the reaction ITP + H2O = IMP + diphosphate + H(+). The catalysed reaction is dITP + H2O = dIMP + diphosphate + H(+). It catalyses the reaction XTP + H2O = XMP + diphosphate + H(+). The enzyme catalyses N(6)-hydroxy-dATP + H2O = N(6)-hydroxy-dAMP + diphosphate + H(+). Its function is as follows. Pyrophosphatase that hydrolyzes the non-canonical purine nucleotides inosine triphosphate (ITP), deoxyinosine triphosphate (dITP) as well as 2'-deoxy-N-6-hydroxylaminopurine triphosphate (dHAPTP) and 5-bromodeoxyuridine 5'-triphosphate (BrdUTP) to their respective monophosphate derivatives. Xanthosine 5'-triphosphate (XTP) is also a potential substrate. The enzyme does not distinguish between the deoxy- and ribose forms. Probably excludes non-canonical purines from RNA and DNA precursor pools, thus preventing their incorporation into RNA and DNA and avoiding chromosomal lesions. This is Inosine triphosphate pyrophosphatase from Saccharomyces cerevisiae (strain ATCC 204508 / S288c) (Baker's yeast).